A 265-amino-acid chain; its full sequence is 3'(2'),5'-bisphosphate nucleotidase CysQ (265 aa).

Mg(2+) contacts are provided by Glu80, Asp99, Leu101, Asp102, and Asp222. Glu80 contributes to the substrate binding site. Substrate-binding positions include 101–104 (LDGT) and Asp222.

This sequence belongs to the inositol monophosphatase superfamily. CysQ family. It depends on Mg(2+) as a cofactor.

It is found in the cell inner membrane. The enzyme catalyses adenosine 3',5'-bisphosphate + H2O = AMP + phosphate. Its function is as follows. Converts adenosine-3',5'-bisphosphate (PAP) to AMP. The sequence is that of 3'(2'),5'-bisphosphate nucleotidase CysQ from Buchnera aphidicola subsp. Acyrthosiphon pisum (strain APS) (Acyrthosiphon pisum symbiotic bacterium).